A 586-amino-acid chain; its full sequence is MKYILVTGGVISGIGKGIIASSIGTILKSCGLRVTAIKIDPYINIDAGTFSPYEHGEVFVLNDGGEVDLDLGNYERFLDINLYKDNNITTGKIYQHVINKERRGDYLGKTVQVVPHITDAVQEWVMNQAMVPVDGHKEEPQICVIELGGTIGDIEGMPFVEAFRQFQFKAKRENFCNIHVSLVPQPSATGEQKTKPTQNSVRALRGLGLSPDLIVCRSSTPIEMAVKEKISMFCHVNPEQVICIHDVSSTYRVPVLLEEQGIIKYFKERLDLPIGDSASSLLSKWRNMADRYERLQKTCSIALVGKYTKLRDCYASVFKALEHSALAINHKLNLMYIDSIDLEQTTEVEDPVKFHEAWQKLCKADGVLVPGGFGIRGTLGKLQAISWARSRKIPFLGVCLGMQLAVIEFARNCLNLKDADSTEFEPNARVPVVIDMPEHNPGNLGGTMRLGIRRTVFKTENSILRKLYGDVPFIEERHRHRYEVNPSLISQLEQKDLSFVGQDVDGERMEIIELANHPYFVGVQFHPEFSSRPMKPSPPYLGLLLAATGNLNAYLLQGCKLSSSDRYSDASDDSFSEPRLAELEIS.

The Glutamine amidotransferase type-1 domain occupies 300-554 (SIALVGKYTK…LAATGNLNAY (255 aa)). Catalysis depends on for GATase activity residues Cys-399, His-526, and Glu-528. The interval 564–586 (SDRYSDASDDSFSEPRLAELEIS) is disordered. 3 positions are modified to phosphoserine: Ser-568, Ser-571, and Ser-574.

The protein belongs to the CTP synthase family.

The enzyme catalyses UTP + L-glutamine + ATP + H2O = CTP + L-glutamate + ADP + phosphate + 2 H(+). The protein operates within pyrimidine metabolism; CTP biosynthesis via de novo pathway; CTP from UDP: step 2/2. Catalyzes the ATP-dependent amination of UTP to CTP with either L-glutamine or ammonia as the source of nitrogen. Constitutes the rate-limiting enzyme in the synthesis of cytosine nucleotides. This is CTP synthase 2 (CTPS2) from Bos taurus (Bovine).